The following is a 115-amino-acid chain: uncharacterized protein (115 aa).

The CHCH domain maps to 63–108 (GSPCGFEFREAITCQKTNSDGEIEQGACGKELMSFMECVTRTQCFG). 2 short sequence motifs (cx9C motif) span residues 66–76 (CGFEFREAITC) and 90–100 (CGKELMSFMEC). 2 cysteine pairs are disulfide-bonded: C66/C100 and C76/C90.

This is an uncharacterized protein from Caenorhabditis elegans.